We begin with the raw amino-acid sequence, 131 residues long: Dihydroneopterin aldolase 2 (131 aa).

Substrate is bound by residues Glu29, Tyr61, and Leu80–Glu81. The Proton donor/acceptor role is filled by Lys107.

It belongs to the DHNA family. In terms of assembly, homooctamer. Forms a hollow cylinder assembled from two ring-shaped tetramers. As to expression, expressed in roots, leaves, stems and siliques.

It catalyses the reaction 7,8-dihydroneopterin = 6-hydroxymethyl-7,8-dihydropterin + glycolaldehyde. The protein operates within cofactor biosynthesis; tetrahydrofolate biosynthesis; 2-amino-4-hydroxy-6-hydroxymethyl-7,8-dihydropteridine diphosphate from 7,8-dihydroneopterin triphosphate: step 3/4. In terms of biological role, catalyzes the conversion of 7,8-dihydroneopterin into 6-hydroxymethyl-7,8-dihydropterin, a biosynthetic precursor of the vitamin tetrahydrofolate. Can use L-threo-dihydroneopterin and D-erythro-dihydroneopterin as substrates for the formation of 6-hydroxymethyldihydropterin, but it can also catalyze the epimerization of carbon 2' of dihydroneopterin and dihydromonapterin. This is Dihydroneopterin aldolase 2 from Arabidopsis thaliana (Mouse-ear cress).